A 398-amino-acid chain; its full sequence is Chalcone synthase 1 (398 aa).

58–65 (KFKRMCDK) is a binding site for CoA. The active-site Acyl-thioester intermediate is the C167. Residues T200 and 219–220 (GD) contribute to the substrate site. A311 contacts CoA.

Belongs to the thiolase-like superfamily. Chalcone/stilbene synthases family. In terms of assembly, homodimer.

It catalyses the reaction (E)-4-coumaroyl-CoA + 3 malonyl-CoA + 3 H(+) = 2',4,4',6'-tetrahydroxychalcone + 3 CO2 + 4 CoA. The protein operates within secondary metabolite biosynthesis; flavonoid biosynthesis. Functionally, the primary product of this enzyme is 4,2',4',6'-tetrahydroxychalcone (also termed naringenin-chalcone or chalcone) which can under specific conditions spontaneously isomerize into naringenin. This Oryza sativa subsp. indica (Rice) protein is Chalcone synthase 1 (CHS1).